The chain runs to 205 residues: N-(5'-phosphoribosyl)anthranilate isomerase (205 aa).

The protein belongs to the TrpF family.

The enzyme catalyses N-(5-phospho-beta-D-ribosyl)anthranilate = 1-(2-carboxyphenylamino)-1-deoxy-D-ribulose 5-phosphate. Its pathway is amino-acid biosynthesis; L-tryptophan biosynthesis; L-tryptophan from chorismate: step 3/5. The polypeptide is N-(5'-phosphoribosyl)anthranilate isomerase (Phocaeicola vulgatus (strain ATCC 8482 / DSM 1447 / JCM 5826 / CCUG 4940 / NBRC 14291 / NCTC 11154) (Bacteroides vulgatus)).